Reading from the N-terminus, the 188-residue chain is uncharacterized protein (188 aa).

This sequence belongs to the isochorismatase family.

This is an uncharacterized protein from Escherichia coli O157:H7.